A 159-amino-acid polypeptide reads, in one-letter code: Ribosomal RNA large subunit methyltransferase H (159 aa).

S-adenosyl-L-methionine contacts are provided by residues L76, G108, and 127 to 132 (FSKMTF).

Belongs to the RNA methyltransferase RlmH family. Homodimer.

It is found in the cytoplasm. It carries out the reaction pseudouridine(1915) in 23S rRNA + S-adenosyl-L-methionine = N(3)-methylpseudouridine(1915) in 23S rRNA + S-adenosyl-L-homocysteine + H(+). Functionally, specifically methylates the pseudouridine at position 1915 (m3Psi1915) in 23S rRNA. The polypeptide is Ribosomal RNA large subunit methyltransferase H (Bifidobacterium longum (strain DJO10A)).